The chain runs to 185 residues: Elongation factor P (185 aa).

This sequence belongs to the elongation factor P family.

It is found in the cytoplasm. It participates in protein biosynthesis; polypeptide chain elongation. Its function is as follows. Involved in peptide bond synthesis. Stimulates efficient translation and peptide-bond synthesis on native or reconstituted 70S ribosomes in vitro. Probably functions indirectly by altering the affinity of the ribosome for aminoacyl-tRNA, thus increasing their reactivity as acceptors for peptidyl transferase. The protein is Elongation factor P of Fervidobacterium nodosum (strain ATCC 35602 / DSM 5306 / Rt17-B1).